Consider the following 122-residue polypeptide: Small ribosomal subunit protein bS6 (122 aa).

The tract at residues 99 to 122 (PSPMMKEVAREEAKKAAAQTEQAA) is disordered.

This sequence belongs to the bacterial ribosomal protein bS6 family.

In terms of biological role, binds together with bS18 to 16S ribosomal RNA. The polypeptide is Small ribosomal subunit protein bS6 (Ralstonia pickettii (strain 12J)).